Consider the following 157-residue polypeptide: UPF0262 protein amb3341 (157 aa).

This sequence belongs to the UPF0262 family.

This chain is UPF0262 protein amb3341, found in Paramagnetospirillum magneticum (strain ATCC 700264 / AMB-1) (Magnetospirillum magneticum).